The primary structure comprises 147 residues: Transcription elongation factor Spt5 (147 aa).

The KOW domain maps to 91–122; the sequence is KGDVVEIIAGPFKGERAKVIRVDKHKEEVTLE.

Belongs to the archaeal Spt5 family. In terms of assembly, heterodimer composed of Spt4 and Spt5. Interacts with RNA polymerase (RNAP). Forms a homodimer in solution.

Functionally, stimulates transcription elongation. This Methanocaldococcus jannaschii (strain ATCC 43067 / DSM 2661 / JAL-1 / JCM 10045 / NBRC 100440) (Methanococcus jannaschii) protein is Transcription elongation factor Spt5.